The following is a 158-amino-acid chain: Coenzyme F420 hydrogenase subunit delta (158 aa).

It belongs to the peptidase A31 family.

The protein is Coenzyme F420 hydrogenase subunit delta (frhD) of Methanothermobacter thermautotrophicus (strain ATCC 29096 / DSM 1053 / JCM 10044 / NBRC 100330 / Delta H) (Methanobacterium thermoautotrophicum).